The chain runs to 553 residues: HTH-type transcriptional regulator SgrR (553 aa).

The HTH marR-type domain occupies 1–113 (MSTSRLQQQF…RQMLLSQLGR (113 aa)). The H-T-H motif DNA-binding region spans 26 to 49 (LQALAEVLNCSRRHVRSLLGKMQH). Residues 163–494 (ELEPDLSHHW…EELHQDIESW (332 aa)) are solute-binding.

Activates the small RNA gene sgrS under glucose-phosphate stress conditions as well as yfdZ. Represses its own transcription under both stress and non-stress conditions. Might act as a sensor of the intracellular accumulation of phosphoglucose by binding these molecules in its C-terminal solute-binding domain. This Yersinia pestis bv. Antiqua (strain Antiqua) protein is HTH-type transcriptional regulator SgrR.